The sequence spans 381 residues: PqqA peptide cyclase (381 aa).

One can recognise a Radical SAM core domain in the interval 12-228 (VGPPLWLLAE…AEYRQRLAAE (217 aa)). 3 residues coordinate [4Fe-4S] cluster: Cys26, Cys30, and Cys33.

The protein belongs to the radical SAM superfamily. PqqE family. As to quaternary structure, interacts with PqqD. The interaction is necessary for activity of PqqE. It depends on [4Fe-4S] cluster as a cofactor.

The catalysed reaction is [PQQ precursor protein] + S-adenosyl-L-methionine = E-Y cross-linked-[PQQ precursor protein] + 5'-deoxyadenosine + L-methionine + H(+). Its pathway is cofactor biosynthesis; pyrroloquinoline quinone biosynthesis. In terms of biological role, catalyzes the cross-linking of a glutamate residue and a tyrosine residue in the PqqA protein as part of the biosynthesis of pyrroloquinoline quinone (PQQ). This Pseudomonas aeruginosa (strain LESB58) protein is PqqA peptide cyclase.